The chain runs to 574 residues: DNA-directed primase/polymerase protein (574 aa).

Positions 2-22 (KRKWEERVKKVEELASYYERN) form a coiled coil. Residues Arg-76, 116 to 118 (DLE), 167 to 171 (KFSRH), 291 to 294 (RNFR), and Lys-300 each bind substrate. Mn(2+) is bound by residues Asp-116 and Glu-118. Zn(2+) contacts are provided by Cys-424, His-431, Cys-451, and Cys-456. Residues 424–457 (CENIGRAHRSNNIMILVDLKKEVWYQKCHDPVCR) carry the Zinc knuckle motif motif.

It belongs to the eukaryotic-type primase small subunit family. Requires Mn(2+) as cofactor.

It localises to the nucleus. Its subcellular location is the mitochondrion matrix. The protein localises to the chromosome. The catalysed reaction is ssDNA + n NTP = ssDNA/pppN(pN)n-1 hybrid + (n-1) diphosphate.. The enzyme catalyses DNA(n) + a 2'-deoxyribonucleoside 5'-triphosphate = DNA(n+1) + diphosphate. Its function is as follows. DNA primase and DNA polymerase required to tolerate replication-stalling lesions by bypassing them. Required to facilitate mitochondrial and nuclear replication fork progression by initiating de novo DNA synthesis using dNTPs and acting as an error-prone DNA polymerase able to bypass certain DNA lesions. Shows a high capacity to tolerate DNA damage lesions such as 8oxoG and abasic sites in DNA. Provides different translesion synthesis alternatives when DNA replication is stalled: able to synthesize DNA primers downstream of lesions, such as UV lesions, R-loops and G-quadruplexes, to allow DNA replication to continue. Can also realign primers ahead of 'unreadable lesions' such as abasic sites and 6-4 photoproduct (6-4 pyrimidine-pyrimidinone), thereby skipping the lesion. Repriming avoids fork degradation while leading to accumulation of internal ssDNA gaps behind the forks. Also able to incorporate nucleotides opposite DNA lesions such as 8oxoG, like a regular translesion synthesis DNA polymerase. Also required for reinitiating stalled forks after ultraviolet (UV) damage during nuclear DNA replication. Required for mitochondrial DNA (mtDNA) synthesis and replication, by reinitiating synthesis after UV damage or in the presence of chain-terminating nucleotides. In addition to its role in DNA damage response, also required to maintain efficient nuclear and mitochondrial DNA replication in unperturbed cells. The protein is DNA-directed primase/polymerase protein of Gallus gallus (Chicken).